Reading from the N-terminus, the 215-residue chain is Cytochrome b6 (215 aa).

A helical transmembrane segment spans residues 32–52; sequence IFYCLGGITLTCFLVQVATGF. Cys-35 contributes to the heme c binding site. His-86 and His-100 together coordinate heme b. 3 helical membrane-spanning segments follow: residues 90 to 110, 116 to 136, and 186 to 206; these read ASMM…TGGF, LTWV…VTGY, and LHTF…FSMI. Residues His-187 and His-202 each coordinate heme b.

Belongs to the cytochrome b family. PetB subfamily. As to quaternary structure, the 4 large subunits of the cytochrome b6-f complex are cytochrome b6, subunit IV (17 kDa polypeptide, PetD), cytochrome f and the Rieske protein, while the 4 small subunits are PetG, PetL, PetM and PetN. The complex functions as a dimer. Heme b serves as cofactor. The cofactor is heme c.

The protein localises to the plastid. It localises to the chloroplast thylakoid membrane. In terms of biological role, component of the cytochrome b6-f complex, which mediates electron transfer between photosystem II (PSII) and photosystem I (PSI), cyclic electron flow around PSI, and state transitions. This is Cytochrome b6 from Piper cenocladum (Ant piper).